The sequence spans 200 residues: ATP-dependent Clp protease proteolytic subunit 1 (200 aa).

Serine 98 acts as the Nucleophile in catalysis. The active site involves histidine 123.

It belongs to the peptidase S14 family. In terms of assembly, fourteen ClpP subunits assemble into 2 heptameric rings which stack back to back to give a disk-like structure with a central cavity, resembling the structure of eukaryotic proteasomes.

The protein localises to the cytoplasm. It carries out the reaction Hydrolysis of proteins to small peptides in the presence of ATP and magnesium. alpha-casein is the usual test substrate. In the absence of ATP, only oligopeptides shorter than five residues are hydrolyzed (such as succinyl-Leu-Tyr-|-NHMec, and Leu-Tyr-Leu-|-Tyr-Trp, in which cleavage of the -Tyr-|-Leu- and -Tyr-|-Trp bonds also occurs).. Cleaves peptides in various proteins in a process that requires ATP hydrolysis. Has a chymotrypsin-like activity. Plays a major role in the degradation of misfolded proteins. In Mycobacterium bovis (strain ATCC BAA-935 / AF2122/97), this protein is ATP-dependent Clp protease proteolytic subunit 1.